The sequence spans 259 residues: Exosome complex component Rrp42 (259 aa).

Belongs to the RNase PH family. Rrp42 subfamily. In terms of assembly, component of the archaeal exosome complex. Forms a hexameric ring-like arrangement composed of 3 Rrp41-Rrp42 heterodimers. The hexameric ring associates with a trimer of Rrp4 and/or Csl4 subunits.

The protein localises to the cytoplasm. Non-catalytic component of the exosome, which is a complex involved in RNA degradation. Contributes to the structuring of the Rrp41 active site. This Archaeoglobus fulgidus (strain ATCC 49558 / DSM 4304 / JCM 9628 / NBRC 100126 / VC-16) protein is Exosome complex component Rrp42.